Reading from the N-terminus, the 316-residue chain is Transaldolase (316 aa).

The active-site Schiff-base intermediate with substrate is lysine 125.

This sequence belongs to the transaldolase family. Type 1 subfamily. In terms of assembly, homodimer.

The protein localises to the cytoplasm. It carries out the reaction D-sedoheptulose 7-phosphate + D-glyceraldehyde 3-phosphate = D-erythrose 4-phosphate + beta-D-fructose 6-phosphate. It functions in the pathway carbohydrate degradation; pentose phosphate pathway; D-glyceraldehyde 3-phosphate and beta-D-fructose 6-phosphate from D-ribose 5-phosphate and D-xylulose 5-phosphate (non-oxidative stage): step 2/3. Functionally, transaldolase is important for the balance of metabolites in the pentose-phosphate pathway. The sequence is that of Transaldolase from Verminephrobacter eiseniae (strain EF01-2).